A 694-amino-acid chain; its full sequence is Elongation factor G (694 aa).

In terms of domain architecture, tr-type G spans E8–T287. GTP is bound by residues A17 to T24, D86 to H90, and N140 to D143.

This sequence belongs to the TRAFAC class translation factor GTPase superfamily. Classic translation factor GTPase family. EF-G/EF-2 subfamily.

It is found in the cytoplasm. In terms of biological role, catalyzes the GTP-dependent ribosomal translocation step during translation elongation. During this step, the ribosome changes from the pre-translocational (PRE) to the post-translocational (POST) state as the newly formed A-site-bound peptidyl-tRNA and P-site-bound deacylated tRNA move to the P and E sites, respectively. Catalyzes the coordinated movement of the two tRNA molecules, the mRNA and conformational changes in the ribosome. This chain is Elongation factor G, found in Brucella canis (strain ATCC 23365 / NCTC 10854 / RM-666).